The sequence spans 61 residues: Large ribosomal subunit protein uL29 (61 aa).

The protein belongs to the universal ribosomal protein uL29 family.

In Nitratidesulfovibrio vulgaris (strain ATCC 29579 / DSM 644 / CCUG 34227 / NCIMB 8303 / VKM B-1760 / Hildenborough) (Desulfovibrio vulgaris), this protein is Large ribosomal subunit protein uL29.